The chain runs to 146 residues: UPF0260 protein VP2169 (146 aa).

It belongs to the UPF0260 family.

The sequence is that of UPF0260 protein VP2169 from Vibrio parahaemolyticus serotype O3:K6 (strain RIMD 2210633).